Here is a 333-residue protein sequence, read N- to C-terminus: Nucleoid-associated protein APL_0429 (333 aa).

Belongs to the YejK family.

It localises to the cytoplasm. It is found in the nucleoid. This Actinobacillus pleuropneumoniae serotype 5b (strain L20) protein is Nucleoid-associated protein APL_0429.